The primary structure comprises 114 residues: Non-specific lipid-transfer protein 2 (114 aa).

Positions 1–23 (MEMVNKIACFVLLCMVVVAPHAE) are cleaved as a signal peptide. 4 cysteine pairs are disulfide-bonded: cysteine 27–cysteine 73, cysteine 37–cysteine 50, cysteine 51–cysteine 96, and cysteine 71–cysteine 110.

Belongs to the plant LTP family.

In terms of biological role, plant non-specific lipid-transfer proteins transfer phospholipids as well as galactolipids across membranes. May play a role in wax or cutin deposition in the cell walls of expanding epidermal cells and certain secretory tissues. In Solanum pennellii (Tomato), this protein is Non-specific lipid-transfer protein 2 (LTP2).